The sequence spans 415 residues: METKRVLSSSGSIDSISPLPDELLSHILSFLPTKRAASTSILSKRWRTLFPLMNHLCASLYLDDTDLLYPERQTEEEYYVIHNSFRNFVDKTLSGCNNNSLKKFSLTYEDDDVQRMCLTTGMMSKALEQGVSDLELYIYMPLMYEPPRLLPDTVFINNTLVKLTLGTELCLGRSPWENLEELYIHHIYIEDRDEEFNIHTAPHYIAHNIKKLTVCYNNDVQAPRILSIYTPNLVYLDYSDYLTCLYNSENHFNDLLEARLDLAFARAGRWGDEHDTCLKIMNSITNVQILHLSCFTVENLATLHFEGSEKEYWQLLCNMIEKSPKLETLVLEGLYGISDCEVGIDGGNMVKVVEIQEYKGRLEELNQVKCFLREMENLEEVKVNTSDEIENKLQLTNDLLALLPKRSSKCNIHVL.

The F-box domain occupies 13-59; sequence IDSISPLPDELLSHILSFLPTKRAASTSILSKRWRTLFPLMNHLCAS.

This Arabidopsis thaliana (Mouse-ear cress) protein is Putative F-box protein At5g40050.